The following is a 498-amino-acid chain: tRNA-guanine(15) transglycosylase (498 aa).

Residue Asp-85 is the Nucleophile of the active site. Asp-120 contributes to the substrate binding site. Positions 275, 277, and 280 each coordinate Zn(2+).

It belongs to the archaeosine tRNA-ribosyltransferase family. It depends on Zn(2+) as a cofactor.

The catalysed reaction is guanosine(15) in tRNA + 7-cyano-7-deazaguanine = 7-cyano-7-carbaguanosine(15) in tRNA + guanine. Its pathway is tRNA modification; archaeosine-tRNA biosynthesis. Its function is as follows. Exchanges the guanine residue with 7-cyano-7-deazaguanine (preQ0) at position 15 in the dihydrouridine loop (D-loop) of archaeal tRNAs. This Sulfolobus acidocaldarius (strain ATCC 33909 / DSM 639 / JCM 8929 / NBRC 15157 / NCIMB 11770) protein is tRNA-guanine(15) transglycosylase.